The following is a 462-amino-acid chain: Integrator complex subunit 12 (462 aa).

The tract at residues 39-132 (LARGIDSSYR…PETRSSPITV (94 aa)) is disordered. Over residues 59–86 (ISSTKTVSVKQEPKTSSSLPSGNNNGKV) the composition is skewed to polar residues. Residue Lys68 forms a Glycyl lysine isopeptide (Lys-Gly) (interchain with G-Cter in SUMO2) linkage. Over residues 88–125 (TTEKVKKEGEKRPADKMKSDITEGADVPKKPRLEKPET) the composition is skewed to basic and acidic residues. Ser128 carries the post-translational modification Phosphoserine. Residues 159–215 (GLACVVCRQMTVASGNQLVECQECHNLYHQDCHKPQVTDKEVTDPRLVWYCARCTRQ) form a PHD-type zinc finger. Lys254 is covalently cross-linked (Glycyl lysine isopeptide (Lys-Gly) (interchain with G-Cter in SUMO2)). The span at 305-328 (PSTAKLSSAAQNNSGKPATSSANQ) shows a compositional bias: polar residues. The interval 305–462 (PSTAKLSSAA…KKAAQKKLKK (158 aa)) is disordered. 2 stretches are compositionally biased toward low complexity: residues 347-358 (KIGSSNSTSPTV) and 382-431 (VSKV…PSAS). Residues 434-443 (GPTSQESQLN) are compositionally biased toward polar residues. Residues 449–462 (QMVKKKAAQKKLKK) are compositionally biased toward basic residues.

The protein belongs to the Integrator subunit 12 family. In terms of assembly, component of the Integrator complex, composed of core subunits INTS1, INTS2, INTS3, INTS4, INTS5, INTS6, INTS7, INTS8, INTS9/RC74, INTS10, INTS11/CPSF3L, INTS12, INTS13, INTS14 and INTS15. The core complex associates with protein phosphatase 2A subunits PPP2CA and PPP2R1A, to form the Integrator-PP2A (INTAC) complex. Post-translationally, dephosphorylated at Ser-128 by the PNUTS-PP1 complex, promoting RNA polymerase II transcription pause-release.

The protein resides in the nucleus. Functionally, component of the integrator complex, a multiprotein complex that terminates RNA polymerase II (Pol II) transcription in the promoter-proximal region of genes. The integrator complex provides a quality checkpoint during transcription elongation by driving premature transcription termination of transcripts that are unfavorably configured for transcriptional elongation: the complex terminates transcription by (1) catalyzing dephosphorylation of the C-terminal domain (CTD) of Pol II subunit POLR2A/RPB1 and SUPT5H/SPT5, (2) degrading the exiting nascent RNA transcript via endonuclease activity and (3) promoting the release of Pol II from bound DNA. The integrator complex is also involved in terminating the synthesis of non-coding Pol II transcripts, such as enhancer RNAs (eRNAs), small nuclear RNAs (snRNAs), telomerase RNAs and long non-coding RNAs (lncRNAs). Mediates recruitment of cytoplasmic dynein to the nuclear envelope, probably as component of the integrator complex. The chain is Integrator complex subunit 12 (INTS12) from Bos taurus (Bovine).